The primary structure comprises 231 residues: Large ribosomal subunit protein uL1 (231 aa).

The protein belongs to the universal ribosomal protein uL1 family. In terms of assembly, part of the 50S ribosomal subunit.

Binds directly to 23S rRNA. The L1 stalk is quite mobile in the ribosome, and is involved in E site tRNA release. Functionally, protein L1 is also a translational repressor protein, it controls the translation of the L11 operon by binding to its mRNA. The sequence is that of Large ribosomal subunit protein uL1 from Carboxydothermus hydrogenoformans (strain ATCC BAA-161 / DSM 6008 / Z-2901).